We begin with the raw amino-acid sequence, 218 residues long: Ras-related protein RABE1e (218 aa).

22-29 (GDSGVGKS) lines the GTP pocket. The Effector region signature appears at 44-52 (FITTIGIDF). GTP contacts are provided by residues 70–74 (DTAGQ), 128–131 (NKAD), and 159–160 (SA). Residues 182-218 (TESDTKAEPQGIKITKQDANKASSSSTNEKSACCSYV) form a disordered region. Polar residues predominate over residues 201–211 (NKASSSSTNEK). S-geranylgeranyl cysteine attachment occurs at residues cysteine 214 and cysteine 215.

The protein belongs to the small GTPase superfamily. Rab family. As to quaternary structure, interacts with PI5K2.

It is found in the golgi apparatus membrane. The protein resides in the cell membrane. Its function is as follows. Involved in membrane trafficking from the Golgi to the plasma membrane. In Arabidopsis thaliana (Mouse-ear cress), this protein is Ras-related protein RABE1e (RABE1E).